The sequence spans 127 residues: uncharacterized protein (127 aa).

The protein belongs to the transcriptional regulatory CopG/NikR family.

This is an uncharacterized protein from Methanocaldococcus jannaschii (strain ATCC 43067 / DSM 2661 / JAL-1 / JCM 10045 / NBRC 100440) (Methanococcus jannaschii).